The following is a 378-amino-acid chain: MADLYTKDWTDVKDKPVARVVFIHGFGEHVNAYPEFFEALNERNIEVYTFDQRGFGHSRKGGPKKQGCTGGWSLVFPDLDYQILRASDTELPLFLWGHSMGGGLALRYGISGTHRHKLAGVIAQAPMLRCHPDTEPNFLLRKALTLVSKVHPNFLFDSDVQSQHITRDEAVNQRLQDDPLVSSVGSLQVFSDMLNRGTKTIELAPQFFLPLLITHGTDDNVTCSDSSKEFYENAGTKDKTYQSYPGFYHSLHIEKKPEVYEYLDKVAAWIYEHSKPSETVKSEQETAVEHPKPTATTSAPSASPTGVPVEEESHKATSDAVPPAEAKPEPVPASAAERAPTSESTTVPETIVASTTKVISEPAPRVTTAATADIVTNK.

The GXSXG signature appears at 97-101 (GHSMG). The active-site Nucleophile is the Ser-99. Catalysis depends on charge relay system residues Asp-219 and His-249. Residues 276–292 (PSETVKSEQETAVEHPK) show a composition bias toward basic and acidic residues. Positions 276–350 (PSETVKSEQE…TSESTTVPET (75 aa)) are disordered. Low complexity predominate over residues 293–305 (PTATTSAPSASPT). Position 301 is a phosphoserine (Ser-301). Residues 341–350 (TSESTTVPET) show a composition bias toward polar residues.

This sequence belongs to the AB hydrolase superfamily. Monoacylglycerol lipase family.

Its subcellular location is the lipid droplet. The protein localises to the cytoplasm. The protein resides in the endoplasmic reticulum. It is found in the mitochondrion outer membrane. The catalysed reaction is Hydrolyzes glycerol monoesters of long-chain fatty acids.. The protein operates within glycerolipid metabolism; triacylglycerol degradation. In terms of biological role, converts monoacylglycerides (MAG) to free fatty acids and glycerol. Has a strong preference for monounsaturated monoglycerides. Required for efficient degradation of MAG, short-lived intermediates of glycerolipid metabolism which may also function as lipid signaling molecules. Controls inactivation of the signaling lipid N-palmitoylethanolamine (PEA). Involved in fatty acid ethyl ester (FAEE) catabolism. FAEEs are non-oxidative metabolites of ethanol that are transiently incorporated into lipid droplets (LDs). Their mobilization by LD-resident FAEE hydrolases facilitates a controlled metabolism of these potentially toxic lipid metabolites. This chain is Putative monoglyceride lipase (mgl1), found in Schizosaccharomyces pombe (strain 972 / ATCC 24843) (Fission yeast).